The sequence spans 665 residues: Pentatricopeptide repeat-containing protein At1g04840 (665 aa).

PPR repeat units lie at residues 90–124, 125–155, 160–190, 195–229, 230–256, 257–291, 292–326, 327–357, 358–392, 393–423, and 429–459; these read NPFVLNALIRGLTENARFESSVRHFILMLRLGVKP, DRLTFPFVLKSNSKLGFRWLGRALHAATLKN, DSFVRLSLVDMYAKTGQLKHAFQVFEESPDR, SILIWNVLINGYCRAKDMHMATTLFRSMPERNSGS, WSTLIKGYVDSGELNRAKQLFELMPEK, NVVSWTTLINGFSQTGDYETAISTYFEMLEKGLKP, NEYTIAAVLSACSKSGALGSGIRIHGYILDNGIKL, DRAIGTALVDMYAKCGELDCAATVFSNMNHK, DILSWTAMIQGWAVHGRFHQAIQCFRQMMYSGEKP, DEVVFLAVLTACLNSSEVDLGLNFFDSMRLD, and TLKHYVLVVDLLGRAGKLNEAHELVENMPIN. A type E motif region spans residues 464–539; that stretch reads TWAALYRACK…SLGWSYIELD (76 aa). Positions 540 to 570 are type E(+) motif; the sequence is GQLNKFSAGDYSHKLTQEIGLKLDEIISLAI. The interval 571 to 665 is type DYW motif; it reads QKGYNPGADW…DGRCSCGDYW (95 aa).

It belongs to the PPR family. PCMP-H subfamily.

This chain is Pentatricopeptide repeat-containing protein At1g04840 (PCMP-H64), found in Arabidopsis thaliana (Mouse-ear cress).